The sequence spans 299 residues: MEAFVSGGAGGVGAAAVVGVFVAAAVVGGFVAAVALAERAGVIAPRKRPNAPPAVPGLPIIGNLHQLKEKKPHQTFTKWAEIYGPIYTIRIGASSVVVLNSTEVAKEAMVAKFSSISTRKLSKALTVLTRDKSMVATSDYGDFHKMVKRYVMSSTLGTSAQKKFRDTRDMMINNMLSTFHKLVKDDPHVPLIFRDVFKDELFRLSMIQSLGEDVSSVYVDEFGRDISKEEIYNATVTDMMMCAIEVDWRDFFSYLSWVPNKSFETRVFTAEARRTAVMRALIKQQKERIVRGEVTKCIL.

A helical membrane pass occupies residues 16–36 (AVVGVFVAAAVVGGFVAAVAL).

It belongs to the cytochrome P450 family. As to expression, expressed in roots and panicles.

It localises to the membrane. The chain is Ent-kaurene oxidase-like protein 1 from Oryza sativa subsp. japonica (Rice).